The sequence spans 129 residues: UPF0146 protein VNG_2609C (129 aa).

The protein belongs to the UPF0146 family.

This chain is UPF0146 protein VNG_2609C, found in Halobacterium salinarum (strain ATCC 700922 / JCM 11081 / NRC-1) (Halobacterium halobium).